The chain runs to 183 residues: Adenine phosphoribosyltransferase (183 aa).

Belongs to the purine/pyrimidine phosphoribosyltransferase family. Homodimer.

The protein resides in the cytoplasm. The enzyme catalyses AMP + diphosphate = 5-phospho-alpha-D-ribose 1-diphosphate + adenine. It functions in the pathway purine metabolism; AMP biosynthesis via salvage pathway; AMP from adenine: step 1/1. Its function is as follows. Catalyzes a salvage reaction resulting in the formation of AMP, that is energically less costly than de novo synthesis. The protein is Adenine phosphoribosyltransferase of Shewanella oneidensis (strain ATCC 700550 / JCM 31522 / CIP 106686 / LMG 19005 / NCIMB 14063 / MR-1).